Here is a 1333-residue protein sequence, read N- to C-terminus: ABC transporter ATP-binding protein/permease PDR18 (1333 aa).

Residues 13-33 (FLEGQTFGDILCLPWTIIKGI) form a helical membrane-spanning segment. In terms of domain architecture, ABC transporter 1 spans 30–281 (IKGIRERKNR…FENMGYLCPP (252 aa)). Residues Asn48, Asn144, Asn205, and Asn350 are each glycosylated (N-linked (GlcNAc...) asparagine). The next 6 helical transmembrane spans lie at 392–412 (YTVI…SLFY), 425–445 (SGVL…NISF), 474–494 (FPFR…LAGL), 499–519 (GAFF…TSLF), 534–554 (SIAG…IQLP), and 642–662 (FGIM…FTEY). Asn697 and Asn733 each carry an N-linked (GlcNAc...) asparagine glycan. Positions 729-971 (FIWKNVSFTI…VIKYFEKNGA (243 aa)) constitute an ABC transporter 2 domain. Residue 765–772 (GESGAGKT) coordinates ATP. Asn958 carries N-linked (GlcNAc...) asparagine glycosylation. Helical transmembrane passes span 1071–1091 (LLMI…VNAI), 1092–1112 (GLQN…PATN), 1150–1170 (PYHL…LGVF), 1178–1198 (VFYL…ALMI), 1210–1230 (VIVG…QPAS), and 1235–1255 (FWTF…LVGL). Asn1320 carries an N-linked (GlcNAc...) asparagine glycan.

This sequence belongs to the ABC transporter superfamily. ABCG family. PDR (TC 3.A.1.205) subfamily.

The protein resides in the membrane. The polypeptide is ABC transporter ATP-binding protein/permease PDR18 (PDR18) (Saccharomyces cerevisiae (strain ATCC 204508 / S288c) (Baker's yeast)).